We begin with the raw amino-acid sequence, 155 residues long: Nuclear cap-binding protein subunit 2 (155 aa).

MRNA contacts are provided by residues Tyr-19, Tyr-42, Arg-111–Asp-115, Arg-122–Arg-126, and Gln-132–Val-133. The 79-residue stretch at Ala-39–Gly-117 folds into the RRM domain. The disordered stretch occupies residues Gly-121–Ser-155. A compositionally biased stretch (basic and acidic residues) spans Val-133 to Pro-143.

This sequence belongs to the RRM NCBP2 family. Component of the nuclear cap-binding complex (CBC), a heterodimer composed of ncbp1/cbp80 and ncbp2/cbp20 that interacts with m7GpppG-capped RNA.

It localises to the nucleus. Its subcellular location is the cytoplasm. Its function is as follows. Component of the cap-binding complex (CBC), which binds co-transcriptionally to the 5' cap of pre-mRNAs and is involved in various processes such as pre-mRNA splicing, translation regulation, nonsense-mediated mRNA decay, RNA-mediated gene silencing (RNAi) by microRNAs (miRNAs) and mRNA export. The CBC complex is involved in mRNA export from the nucleus, leading to the recruitment of the mRNA export machinery to the 5' end of mRNA and to mRNA export in a 5' to 3' direction through the nuclear pore. The CBC complex is also involved in mediating U snRNA and intronless mRNAs export from the nucleus. The CBC complex is essential for a pioneer round of mRNA translation, before steady state translation when the CBC complex is replaced by cytoplasmic cap-binding protein eIF4E. The pioneer round of mRNA translation mediated by the CBC complex plays a central role in nonsense-mediated mRNA decay (NMD), NMD only taking place in mRNAs bound to the CBC complex, but not on eIF4E-bound mRNAs. The CBC complex enhances NMD in mRNAs containing at least one exon-junction complex (EJC), promoting the interaction between upf1 and upf2. The CBC complex is also involved in 'failsafe' NMD, which is independent of the EJC complex, while it does not participate in Staufen-mediated mRNA decay (SMD). During cell proliferation, the CBC complex is also involved in microRNAs (miRNAs) biogenesis via its interaction with srrt/ars2, thereby being required for miRNA-mediated RNA interference. The CBC complex also acts as a negative regulator of parn, thereby acting as an inhibitor of mRNA deadenylation. In the CBC complex, ncbp2/cbp20 recognizes and binds capped RNAs (m7GpppG-capped RNA) but requires ncbp1/cbp80 to stabilize the movement of its N-terminal loop and lock the CBC into a high affinity cap-binding state with the cap structure. The conventional cap-binding complex with NCBP2 binds both small nuclear RNA (snRNA) and messenger (mRNA) and is involved in their export from the nucleus. The sequence is that of Nuclear cap-binding protein subunit 2 (ncbp2) from Danio rerio (Zebrafish).